The sequence spans 160 residues: Transcription antitermination protein NusB (160 aa).

The protein belongs to the NusB family.

Functionally, involved in transcription antitermination. Required for transcription of ribosomal RNA (rRNA) genes. Binds specifically to the boxA antiterminator sequence of the ribosomal RNA (rrn) operons. The protein is Transcription antitermination protein NusB of Rhizobium meliloti (strain 1021) (Ensifer meliloti).